Here is a 302-residue protein sequence, read N- to C-terminus: 4-diphosphocytidyl-2-C-methyl-D-erythritol kinase (302 aa).

Residue lysine 32 is part of the active site. 115-125 is a binding site for ATP; that stretch reads PMGGGVGGGSS. Aspartate 157 is an active-site residue.

This sequence belongs to the GHMP kinase family. IspE subfamily.

The catalysed reaction is 4-CDP-2-C-methyl-D-erythritol + ATP = 4-CDP-2-C-methyl-D-erythritol 2-phosphate + ADP + H(+). The protein operates within isoprenoid biosynthesis; isopentenyl diphosphate biosynthesis via DXP pathway; isopentenyl diphosphate from 1-deoxy-D-xylulose 5-phosphate: step 3/6. Catalyzes the phosphorylation of the position 2 hydroxy group of 4-diphosphocytidyl-2C-methyl-D-erythritol. The protein is 4-diphosphocytidyl-2-C-methyl-D-erythritol kinase of Actinobacillus succinogenes (strain ATCC 55618 / DSM 22257 / CCUG 43843 / 130Z).